The following is a 927-amino-acid chain: MDLKPNIRRKEKRNLLKGEAALEKKGSIDRKTKNKAYPSTTHDPHQNDDSNIPGLGSGLLERIKDIVQRPTDTQLKGQDSNHKKASLTETKTEKAKVKPKAKKKNSKEKISKSSKQDEHKTDVHKESVSKLSKNLESRNNRDENSAKREKNNSHQVEADTNNATEMVSSNAKKSVYPLYYDSATVKKGLKSGTLFKGTLRILENHRSAFACMEDIPDFYVDGPIARNRAFHNDVVIVEPVMNNDSPTEKSNFLQNGVEKVKIKDHDDELGGAMEHLERLEIKSVASFKGDSRTRARVVAIEKRAEISKIVGILRAPGWSLKNVEYVSKKSSYAIFIPKDKRLPFITIHKNDLSDLSGENWIENILKHHDQLFSVEITRWSIYSRYPMGVLGEKLGNITDVEAYTNALLLENGISSSPFSDEVLNCLPPDDWIISHEEIKKRRDLRNELIITIDPETARDLDDAVSCRALDNGTYEVGVHIADVTHFVKPDSALDKEAASRATTVYLVQKAIPMLPPLLCERLCSLNPNVERLAFSVFWKLDSNGKEIGKRWFGKTVIKTCARLAYSEAQGVIEGKSWDDAVGKPIGGTHTPKDVETSILTLCEISRKLRKDRFAKGAVEINSTELKFQLDEYGMPNKCEVYEQTDANHLIEEFMLLANRSVAEHISKNFSNNSLLRRHASPKEKQINEFCHFLKSMNFDFDASSSAAFNASMVRLRSTFNEELVELFENMAVRSLNRAEYFCTGDFGEKTDWHHYALSFNHYTHFTSPIRRYPDIIVHRLLERSLKNTSPGIDKKNCSLVAAHCNEKKEKSTTVQEDSQQLFLSVYIAEYCKKHDKKSMPVQAFATRISGNSIDVYISEYGISNRVDLSSDDRIKSFIVAPDDSSVKITLFDDSQKTIALTDRFQVYLYSDYSRTFFSIRCSLVSLN.

A compositionally biased stretch (basic residues) spans 1-12 (MDLKPNIRRKEK). The disordered stretch occupies residues 1–168 (MDLKPNIRRK…DTNNATEMVS (168 aa)). Residues 13-31 (RNLLKGEAALEKKGSIDRK) show a composition bias toward basic and acidic residues. The segment covering 97 to 106 (VKPKAKKKNS) has biased composition (basic residues). The span at 107 to 152 (KEKISKSSKQDEHKTDVHKESVSKLSKNLESRNNRDENSAKREKNN) shows a compositional bias: basic and acidic residues. Residues 153 to 168 (SHQVEADTNNATEMVS) show a composition bias toward polar residues. Residues Asp453 and Asp462 each contribute to the Mg(2+) site.

This sequence belongs to the RNR ribonuclease family. DIS3L2 subfamily. Mg(2+) serves as cofactor. Requires Mn(2+) as cofactor.

Its subcellular location is the cytoplasm. It is found in the P-body. 3'-5'-exoribonuclease that specifically recognizes RNAs polyuridylated at their 3' end and mediates their degradation. Component of an exosome-independent RNA degradation pathway that mediates degradation of cytoplasmic mRNAs that have been deadenylated and subsequently uridylated at their 3'. The protein is DIS3-like exonuclease 2 (dis32) of Schizosaccharomyces pombe (strain 972 / ATCC 24843) (Fission yeast).